The following is an 84-amino-acid chain: Cell division topological specificity factor (84 aa).

This sequence belongs to the MinE family.

Its function is as follows. Prevents the cell division inhibition by proteins MinC and MinD at internal division sites while permitting inhibition at polar sites. This ensures cell division at the proper site by restricting the formation of a division septum at the midpoint of the long axis of the cell. In Pseudomonas syringae pv. tomato (strain ATCC BAA-871 / DC3000), this protein is Cell division topological specificity factor.